The sequence spans 184 residues: Dual specificity protein phosphatase 22 (184 aa).

Residue Gly2 is the site of N-myristoyl glycine attachment. In terms of domain architecture, Tyrosine-protein phosphatase spans 4–144; sequence GMNKILPGLY…LQEFEKHEVH (141 aa). Ser58 is modified (phosphoserine). The active-site Phosphocysteine intermediate is the Cys88. A protein contacts are provided by Leu89, Ala90, Val92, Ser93, and Arg94.

The protein belongs to the protein-tyrosine phosphatase family. Non-receptor class dual specificity subfamily. Monomer. Interacts with LCK; the interaction is direct. Interacts with UBR2; the interaction is direct. In terms of processing, myristoylation regulates subcellular location, and is necessary for activation of JNK. In terms of tissue distribution, ubiquitous. Highest expression seen in heart, placenta, lung, liver, kidney and pancreas.

Its subcellular location is the cytoplasm. It carries out the reaction O-phospho-L-tyrosyl-[protein] + H2O = L-tyrosyl-[protein] + phosphate. It catalyses the reaction O-phospho-L-seryl-[protein] + H2O = L-seryl-[protein] + phosphate. The enzyme catalyses O-phospho-L-threonyl-[protein] + H2O = L-threonyl-[protein] + phosphate. In terms of biological role, dual specificity phosphatase; can dephosphorylate both phosphotyrosine and phosphoserine or phosphothreonine residues. Activates the JNK signaling pathway. Inhibits T-cell receptor signaling and T-cell mediated immune responses, acting, at least in part, by inducing degradation of E3 ubiquitin ligase UBR2. Dephosphorylates and thereby induces 'Lys-48'-linked ubiquitination of UBR2, leading to proteasomal degradation of UBR2. Dephosphorylates and thereby inactivates tyrosine kinase LCK. Inhibits UBR2-mediated 'Lys-63'-linked ubiquitination of LCK. May play a role in B-cell receptor (BCR) signaling and B-cell function. The polypeptide is Dual specificity protein phosphatase 22 (DUSP22) (Homo sapiens (Human)).